The chain runs to 364 residues: Aminomethyltransferase (364 aa).

Belongs to the GcvT family. The glycine cleavage system is composed of four proteins: P, T, L and H.

The enzyme catalyses N(6)-[(R)-S(8)-aminomethyldihydrolipoyl]-L-lysyl-[protein] + (6S)-5,6,7,8-tetrahydrofolate = N(6)-[(R)-dihydrolipoyl]-L-lysyl-[protein] + (6R)-5,10-methylene-5,6,7,8-tetrahydrofolate + NH4(+). In terms of biological role, the glycine cleavage system catalyzes the degradation of glycine. The protein is Aminomethyltransferase of Shewanella halifaxensis (strain HAW-EB4).